A 328-amino-acid chain; its full sequence is D-cysteine desulfhydrase (328 aa).

The residue at position 51 (lysine 51) is an N6-(pyridoxal phosphate)lysine.

Belongs to the ACC deaminase/D-cysteine desulfhydrase family. Homodimer. It depends on pyridoxal 5'-phosphate as a cofactor.

It catalyses the reaction D-cysteine + H2O = hydrogen sulfide + pyruvate + NH4(+) + H(+). Its function is as follows. Catalyzes the alpha,beta-elimination reaction of D-cysteine and of several D-cysteine derivatives. It could be a defense mechanism against D-cysteine. In Salmonella paratyphi C (strain RKS4594), this protein is D-cysteine desulfhydrase.